We begin with the raw amino-acid sequence, 165 residues long: Lipoprotein signal peptidase (165 aa).

A run of 3 helical transmembrane segments spans residues 9-29, 65-85, and 100-120; these read SFLW…YFVV, WQKY…CYFL, and ALII…GFVV. Residues D121 and D139 contribute to the active site. The chain crosses the membrane as a helical span at residues 134-154; sequence VFNVADIAISLGAGLMILDAF.

Belongs to the peptidase A8 family.

It localises to the cell inner membrane. The enzyme catalyses Release of signal peptides from bacterial membrane prolipoproteins. Hydrolyzes -Xaa-Yaa-Zaa-|-(S,diacylglyceryl)Cys-, in which Xaa is hydrophobic (preferably Leu), and Yaa (Ala or Ser) and Zaa (Gly or Ala) have small, neutral side chains.. It participates in protein modification; lipoprotein biosynthesis (signal peptide cleavage). This protein specifically catalyzes the removal of signal peptides from prolipoproteins. The protein is Lipoprotein signal peptidase of Pasteurella multocida (strain Pm70).